Reading from the N-terminus, the 750-residue chain is Photosystem I P700 chlorophyll a apoprotein A1 (750 aa).

8 helical membrane-spanning segments follow: residues 70–93 (VFSA…FHGA), 156–179 (LYST…FHYH), 195–219 (LNHH…HVSL), 291–309 (TAHH…GHMY), 346–369 (WHAQ…HHMY), 385–411 (LSLF…IFMV), 433–455 (AIIS…LYIH), and 531–549 (FLVH…LILL). The [4Fe-4S] cluster site is built by Cys-573 and Cys-582. The next 2 helical transmembrane spans lie at 589–610 (HVFL…HFSW) and 664–686 (LSAY…MFLF). Position 675 (His-675) interacts with chlorophyll a'. Residues Met-683 and Tyr-691 each contribute to the chlorophyll a site. Residue Trp-692 coordinates phylloquinone. Residues 724–744 (AVGVAHYLLGGIATTWAFFLA) traverse the membrane as a helical segment.

This sequence belongs to the PsaA/PsaB family. The PsaA/B heterodimer binds the P700 chlorophyll special pair and subsequent electron acceptors. PSI consists of a core antenna complex that captures photons, and an electron transfer chain that converts photonic excitation into a charge separation. The eukaryotic PSI reaction center is composed of at least 11 subunits. It depends on P700 is a chlorophyll a/chlorophyll a' dimer, A0 is one or more chlorophyll a, A1 is one or both phylloquinones and FX is a shared 4Fe-4S iron-sulfur center. as a cofactor.

Its subcellular location is the plastid. The protein resides in the chloroplast thylakoid membrane. It carries out the reaction reduced [plastocyanin] + hnu + oxidized [2Fe-2S]-[ferredoxin] = oxidized [plastocyanin] + reduced [2Fe-2S]-[ferredoxin]. Functionally, psaA and PsaB bind P700, the primary electron donor of photosystem I (PSI), as well as the electron acceptors A0, A1 and FX. PSI is a plastocyanin-ferredoxin oxidoreductase, converting photonic excitation into a charge separation, which transfers an electron from the donor P700 chlorophyll pair to the spectroscopically characterized acceptors A0, A1, FX, FA and FB in turn. Oxidized P700 is reduced on the lumenal side of the thylakoid membrane by plastocyanin. The protein is Photosystem I P700 chlorophyll a apoprotein A1 of Anthoceros angustus (Hornwort).